The sequence spans 306 residues: Aspartate carbamoyltransferase catalytic subunit (306 aa).

Carbamoyl phosphate-binding residues include arginine 56 and threonine 57. Lysine 84 contacts L-aspartate. Carbamoyl phosphate contacts are provided by arginine 106, histidine 136, and glutamine 139. Arginine 169 and arginine 221 together coordinate L-aspartate. The carbamoyl phosphate site is built by alanine 262 and proline 263.

It belongs to the aspartate/ornithine carbamoyltransferase superfamily. ATCase family. As to quaternary structure, heterododecamer (2C3:3R2) of six catalytic PyrB chains organized as two trimers (C3), and six regulatory PyrI chains organized as three dimers (R2).

The enzyme catalyses carbamoyl phosphate + L-aspartate = N-carbamoyl-L-aspartate + phosphate + H(+). The protein operates within pyrimidine metabolism; UMP biosynthesis via de novo pathway; (S)-dihydroorotate from bicarbonate: step 2/3. Its function is as follows. Catalyzes the condensation of carbamoyl phosphate and aspartate to form carbamoyl aspartate and inorganic phosphate, the committed step in the de novo pyrimidine nucleotide biosynthesis pathway. In Streptococcus gordonii (strain Challis / ATCC 35105 / BCRC 15272 / CH1 / DL1 / V288), this protein is Aspartate carbamoyltransferase catalytic subunit.